A 57-amino-acid chain; its full sequence is Potassium channel toxin alpha-KTx 8.2 (57 aa).

The N-terminal stretch at 1 to 28 (MSRLYAIILIALVFNVVMTITPDMKVEA) is a signal peptide. 3 disulfide bridges follow: cysteine 31-cysteine 47, cysteine 34-cysteine 52, and cysteine 38-cysteine 54.

This sequence belongs to the short scorpion toxin superfamily. Potassium channel inhibitor family. Alpha-KTx 08 subfamily. Expressed by the venom gland.

Its subcellular location is the secreted. In terms of biological role, this toxin inhibits rKv1.1/KCNA1 (100% inhibition at 3 uM), Kv1.3/KCNA3 (human, mouse and rat) (IC(50)=269-467 nM), shaker IR (60% at 3 uM) and activates the mouse capsaicin receptor TRPV1 (EC(50)=132 uM, at 20 degrees Celsius), a non-selective cation channel expressed by sensory neurons of the pain pathway. In vivo, intraplantar injection of this toxin in WT mice hind paw shows significant acute pain, whereas no pain is observed when the toxin is injected into TRPV1 KO mice. In addition, subcutaneous injection into mice (185 mg) produces an excitation of the animal, but no lethality, whereas injection into cockroaches does not provoke lethality as well. The sequence is that of Potassium channel toxin alpha-KTx 8.2 from Olivierus martensii (Manchurian scorpion).